Consider the following 243-residue polypeptide: Small ribosomal subunit protein uS3 (243 aa).

Residue Ala2 is modified to N-acetylalanine. Residues Ser6 and Ser35 each carry the phosphoserine modification. A KH type-2 domain is found at 21-92 (LNEFLTRELA…SVELYAEKVA (72 aa)). Thr42 is subject to Phosphothreonine. Lys62 bears the N6-acetyllysine mark. Residues Arg64, Arg65, and Arg67 each carry the asymmetric dimethylarginine modification. Thr70 is subject to Phosphothreonine. Residue Lys90 forms a Glycyl lysine isopeptide (Lys-Gly) (interchain with G-Cter in ubiquitin) linkage. Residue Ser104 is modified to Phosphoserine. Lys132 is modified (N6-succinyllysine). A disordered region spans residues 200 to 243 (PKKPLPDHVSIVEPKDEILPTTPISEQKGGKPEPPAMPQPVPTA). A Glycyl lysine isopeptide (Lys-Gly) (interchain with G-Cter in ubiquitin) cross-link involves residue Lys202. Ser209 carries the post-translational modification Phosphoserine. A Glycyl lysine isopeptide (Lys-Gly) (interchain with G-Cter in SUMO2); alternate cross-link involves residue Lys214. A Glycyl lysine isopeptide (Lys-Gly) (interchain with G-Cter in ubiquitin); alternate cross-link involves residue Lys214. Residues Thr220 and Thr221 each carry the phosphothreonine modification. Residue Ser224 is modified to Phosphoserine. Lys230 is covalently cross-linked (Glycyl lysine isopeptide (Lys-Gly) (interchain with G-Cter in SUMO2)). Residues 231–243 (PEPPAMPQPVPTA) show a composition bias toward pro residues. Position 242 is a phosphothreonine (Thr242).

It belongs to the universal ribosomal protein uS3 family. In terms of assembly, component of the 40S small ribosomal subunit. Identified in a IGF2BP1-dependent mRNP granule complex containing untranslated mRNAs. Interacts with HNRPD. Interacts with PRMT1; the interaction methylates RPS3. Interacts with SUMO1; the interaction sumoylates RPS3. Interacts with UBC9. Interacts with CDK1; the interaction phosphorylates RPS3. Interacts with PRKCD; the interaction phosphorylates RPS3. Interacts with PKB/AKT; the interaction phosphorylates RPS3. Interacts with E2F1; the interaction occurs in the absence of nerve growth factor and increases transcription of pro-apoptotic proteins BCL2L11/BIM and HRK/Dp5. Interacts with the base excision repair proteins APEX1 and OGG1; interaction with OGG1 increases OGG1 N-glycosylase activity. Interacts with UNG; the interaction increases the uracil excision activity of UNG1. Interacts with HSP90; the interaction prevents the ubiquitination and proteasome-dependent degradation of RPS3 and is suppressed by increased ROS levels. Interacts with TOM70; the interaction promotes translocation of RPS3 to the mitochondrion. Interacts (via N-terminus) with RELA (via N-terminus); the interaction enhances the DNA-binding activity of the NF-kappa-B p65-p50 complex. Interacts with NFKBIA; the interaction is direct and may bridge the interaction between RPS3 and RELA. Interacts with IKKB; the interaction phosphorylates RPS3 and enhances its translocation to the nucleus. Interacts (via KH domain) with MDM2 and TP53. Interacts with TRADD. Interacts with ASCC3. Identified in a HCV IRES-mediated translation complex, at least composed of EIF3C, IGF2BP1, RPS3 and HCV RNA-replicon. Interacts with CRY1. In terms of processing, methylation by PRMT1 is required for import into the nucleolus and for ribosome assembly. Post-translationally, sumoylation by SUMO1 enhances protein stability through increased resistance to proteolysis. Sumoylation occurs at one or more of the three consensus sites, Lys-18, Lys-214 and Lys-230. Phosphorylation at Thr-221 by CDK1 occurs mainly in G2/M phase. Phosphorylation by PRKCD occurs on a non-ribosomal-associated form which results in translocation of RPS3 to the nucleus and enhances its endonuclease activity. Phosphorylated on Ser-209 by IKKB in response to activation of the NF-kappa-B p65-p50 complex which enhances the association of RPS3 with importin-alpha and mediates the nuclear translocation of RPS3. Phosphorylation by MAPK is required for translocation to the nucleus following exposure of cells to DNA damaging agents such as hydrogen peroxide. Phosphorylation by PKB/AKT mediates RPS3 nuclear translocation, enhances RPS3 endonuclease activity and suppresses RPS3-induced neuronal apoptosis. In terms of processing, ubiquitinated; ubiquitination is prevented by interaction with HSP90 which stabilizes the protein. Monoubiquitinated at Lys-214 by RNF10 and ZNF598 when a ribosome has stalled during translation of poly(A) sequences, leading to preclude synthesis of a long poly-lysine tail and initiate the ribosome quality control (RQC) pathway to degrade the potentially detrimental aberrant nascent polypeptide. Deubiquitinated at Lys-214 by USP10, preventing degradation by the proteasome and promoting 40S ribosome subunit recycling following ribosome dissociation. Post-translationally, ufmylated by UFL1.

Its subcellular location is the cytoplasm. It is found in the nucleus. The protein localises to the nucleolus. It localises to the mitochondrion inner membrane. The protein resides in the cytoskeleton. Its subcellular location is the spindle. It carries out the reaction 2'-deoxyribonucleotide-(2'-deoxyribose 5'-phosphate)-2'-deoxyribonucleotide-DNA = a 3'-end 2'-deoxyribonucleotide-(2,3-dehydro-2,3-deoxyribose 5'-phosphate)-DNA + a 5'-end 5'-phospho-2'-deoxyribonucleoside-DNA + H(+). Endonuclease activity is inhibited by MgCl2 on apurinic/apyrimidinic DNA but not on UV-irradiated DNA. Its function is as follows. Component of the small ribosomal subunit. The ribosome is a large ribonucleoprotein complex responsible for the synthesis of proteins in the cell. Has endonuclease activity and plays a role in repair of damaged DNA. Cleaves phosphodiester bonds of DNAs containing altered bases with broad specificity and cleaves supercoiled DNA more efficiently than relaxed DNA. Displays high binding affinity for 7,8-dihydro-8-oxoguanine (8-oxoG), a common DNA lesion caused by reactive oxygen species (ROS). Has also been shown to bind with similar affinity to intact and damaged DNA. Stimulates the N-glycosylase activity of the base excision protein OGG1. Enhances the uracil excision activity of UNG1. Also stimulates the cleavage of the phosphodiester backbone by APEX1. When located in the mitochondrion, reduces cellular ROS levels and mitochondrial DNA damage. Has also been shown to negatively regulate DNA repair in cells exposed to hydrogen peroxide. Plays a role in regulating transcription as part of the NF-kappa-B p65-p50 complex where it binds to the RELA/p65 subunit, enhances binding of the complex to DNA and promotes transcription of target genes. Represses its own translation by binding to its cognate mRNA. Binds to and protects TP53/p53 from MDM2-mediated ubiquitination. Involved in spindle formation and chromosome movement during mitosis by regulating microtubule polymerization. Involved in induction of apoptosis through its role in activation of CASP8. Induces neuronal apoptosis by interacting with the E2F1 transcription factor and acting synergistically with it to up-regulate pro-apoptotic proteins BCL2L11/BIM and HRK/Dp5. Interacts with TRADD following exposure to UV radiation and induces apoptosis by caspase-dependent JNK activation. The polypeptide is Small ribosomal subunit protein uS3 (RPS3) (Oryctolagus cuniculus (Rabbit)).